Reading from the N-terminus, the 186-residue chain is dCTP deaminase (186 aa).

Residue 107 to 112 (KSTYAR) participates in dCTP binding. The active-site Proton donor/acceptor is the E133. 4 residues coordinate dCTP: Q152, Y166, K175, and Q176.

Belongs to the dCTP deaminase family. In terms of assembly, homotrimer.

The enzyme catalyses dCTP + H2O + H(+) = dUTP + NH4(+). It participates in pyrimidine metabolism; dUMP biosynthesis; dUMP from dCTP (dUTP route): step 1/2. Its function is as follows. Catalyzes the deamination of dCTP to dUTP. The protein is dCTP deaminase of Wolinella succinogenes (strain ATCC 29543 / DSM 1740 / CCUG 13145 / JCM 31913 / LMG 7466 / NCTC 11488 / FDC 602W) (Vibrio succinogenes).